The following is a 604-amino-acid chain: Protein hemingway (604 aa).

Disordered stretches follow at residues 1–70, 103–309, 359–387, and 544–585; these read MSGA…GNPH, NQLS…PTSQ, SDRR…GGGI, and TIKA…IDLD. Acidic residues-rich tracts occupy residues 8-38, 135-183, 194-214, and 288-300; these read SDEE…YIEP, EDEA…DDAQ, DDSD…EDEP, and EEPE…EENQ. Positions 368–379 are enriched in low complexity; the sequence is EMSSMTETTMTS.

Belongs to the CFAP97 family. Detected in ciliated sensory neurons at all stages of development, and in adult testis.

Its subcellular location is the cell projection. The protein resides in the cilium. It is found in the perikaryon. It localises to the cytoplasm. Its function is as follows. Involved in assembly and/or maintenance of motile cilia. Required during spermatogenesis for axoneme elongation. Necessary for optimal function of the chordotonal (hearing) organs. The sequence is that of Protein hemingway from Drosophila melanogaster (Fruit fly).